The primary structure comprises 449 residues: Keratin, type I cuticular Ha7 (449 aa).

The segment at 1–104 is head; the sequence is MTSFYSTSSC…YGKNTLNGHE (104 aa). The 312-residue stretch at 104–415 folds into the IF rod domain; it reads EKETMKFLND…NLLESEDCKL (312 aa). The segment at 105 to 139 is coil 1A; it reads KETMKFLNDRLANYLEKVRQLEQENAELETTLLER. The segment at 140–150 is linker 1; sequence SKCHESTVCPD. Positions 151–251 are coil 1B; it reads YQSYFRTIEE…HEQEVKILRS (101 aa). Residues 252–267 are linker 12; the sequence is QLGEKFRIELDIEPTI. A coil 2 region spans residues 268–411; that stretch reads DLNRVLGEMR…ATYRNLLESE (144 aa). A tail region spans residues 416-449; that stretch reads PCNPCSTPASCTSCPSCGPVTGGSPSGHGASMGR.

The protein belongs to the intermediate filament family.

The chain is Keratin, type I cuticular Ha7 (KRT37) from Homo sapiens (Human).